A 523-amino-acid chain; its full sequence is 2-isopropylmalate synthase (523 aa).

Positions 5 to 267 (VIIFDTTLRD…HTAINHQEIW (263 aa)) constitute a Pyruvate carboxyltransferase domain. Asp14, His202, His204, and Asn238 together coordinate Mn(2+). Residues 392–523 (RLDYFSVQSG…QHNENNKETV (132 aa)) form a regulatory domain region.

Belongs to the alpha-IPM synthase/homocitrate synthase family. LeuA type 1 subfamily. In terms of assembly, homodimer. It depends on Mn(2+) as a cofactor.

The protein resides in the cytoplasm. It catalyses the reaction 3-methyl-2-oxobutanoate + acetyl-CoA + H2O = (2S)-2-isopropylmalate + CoA + H(+). It functions in the pathway amino-acid biosynthesis; L-leucine biosynthesis; L-leucine from 3-methyl-2-oxobutanoate: step 1/4. Catalyzes the condensation of the acetyl group of acetyl-CoA with 3-methyl-2-oxobutanoate (2-ketoisovalerate) to form 3-carboxy-3-hydroxy-4-methylpentanoate (2-isopropylmalate). In Shigella sonnei (strain Ss046), this protein is 2-isopropylmalate synthase.